Here is a 191-residue protein sequence, read N- to C-terminus: Thymidylate kinase (191 aa).

7 to 14 (GIDTCGKS) contacts ATP.

This sequence belongs to the thymidylate kinase family.

It catalyses the reaction dTMP + ATP = dTDP + ADP. Functionally, phosphorylation of dTMP to form dTDP in both de novo and salvage pathways of dTTP synthesis. This is Thymidylate kinase from Sulfurovum sp. (strain NBC37-1).